The chain runs to 806 residues: Enhancer of polycomb-like protein 1 (806 aa).

2 disordered regions span residues 403-461 (AITS…QEIG) and 751-806 (SLQQ…NAAA). The segment covering 411–420 (KRAKSSKSSK) has biased composition (basic residues). Positions 421–439 (LHKEDSGLYADEKGSEPKK) are enriched in basic and acidic residues. The span at 751-779 (SLQQQQMLQKGQQPINNAPHSQSSSPPSH) shows a compositional bias: low complexity. Polar residues predominate over residues 785-795 (NPGSTPNQSSP).

This sequence belongs to the enhancer of polycomb family. In terms of assembly, component of the NuA4 histone acetyltransferase complex.

The protein resides in the nucleus. In terms of biological role, component of the NuA4 histone acetyltransferase complex which is involved in transcriptional activation of selected genes principally by acetylation of nucleosomal histone H4 and H2A. The NuA4 complex is also involved in DNA repair. Involved in gene silencing by neighboring heterochromatin, blockage of the silencing spreading along the chromosome, and required for cell cycle progression through G2/M. The protein is Enhancer of polycomb-like protein 1 (EPL1) of Kluyveromyces lactis (strain ATCC 8585 / CBS 2359 / DSM 70799 / NBRC 1267 / NRRL Y-1140 / WM37) (Yeast).